Consider the following 371-residue polypeptide: tRNA-specific 2-thiouridylase MnmA (371 aa).

ATP-binding positions include G13–S20 and M39. Residues N99–D101 are interaction with target base in tRNA. The active-site Nucleophile is the C104. A disulfide bridge connects residues C104 and C200. ATP is bound at residue G128. The interval K150 to Q152 is interaction with tRNA. C200 serves as the catalytic Cysteine persulfide intermediate. The interval R309–Y310 is interaction with tRNA.

The protein belongs to the MnmA/TRMU family.

It is found in the cytoplasm. It catalyses the reaction S-sulfanyl-L-cysteinyl-[protein] + uridine(34) in tRNA + AH2 + ATP = 2-thiouridine(34) in tRNA + L-cysteinyl-[protein] + A + AMP + diphosphate + H(+). In terms of biological role, catalyzes the 2-thiolation of uridine at the wobble position (U34) of tRNA, leading to the formation of s(2)U34. The sequence is that of tRNA-specific 2-thiouridylase MnmA from Bacillus subtilis (strain 168).